The primary structure comprises 205 residues: Protein GrpE (205 aa).

Positions 1–40 (MSRKLHEEELTPEGMDAAQNADPAGDPVSENEGALPAAEP) are disordered.

It belongs to the GrpE family. In terms of assembly, homodimer.

It localises to the cytoplasm. Functionally, participates actively in the response to hyperosmotic and heat shock by preventing the aggregation of stress-denatured proteins, in association with DnaK and GrpE. It is the nucleotide exchange factor for DnaK and may function as a thermosensor. Unfolded proteins bind initially to DnaJ; upon interaction with the DnaJ-bound protein, DnaK hydrolyzes its bound ATP, resulting in the formation of a stable complex. GrpE releases ADP from DnaK; ATP binding to DnaK triggers the release of the substrate protein, thus completing the reaction cycle. Several rounds of ATP-dependent interactions between DnaJ, DnaK and GrpE are required for fully efficient folding. The polypeptide is Protein GrpE (Acidobacterium capsulatum (strain ATCC 51196 / DSM 11244 / BCRC 80197 / JCM 7670 / NBRC 15755 / NCIMB 13165 / 161)).